The primary structure comprises 244 residues: 1-(5-phosphoribosyl)-5-[(5-phosphoribosylamino)methylideneamino] imidazole-4-carboxamide isomerase (244 aa).

The Proton acceptor role is filled by aspartate 10. Catalysis depends on aspartate 132, which acts as the Proton donor.

It belongs to the HisA/HisF family.

The protein resides in the cytoplasm. The enzyme catalyses 1-(5-phospho-beta-D-ribosyl)-5-[(5-phospho-beta-D-ribosylamino)methylideneamino]imidazole-4-carboxamide = 5-[(5-phospho-1-deoxy-D-ribulos-1-ylimino)methylamino]-1-(5-phospho-beta-D-ribosyl)imidazole-4-carboxamide. The protein operates within amino-acid biosynthesis; L-histidine biosynthesis; L-histidine from 5-phospho-alpha-D-ribose 1-diphosphate: step 4/9. This chain is 1-(5-phosphoribosyl)-5-[(5-phosphoribosylamino)methylideneamino] imidazole-4-carboxamide isomerase, found in Xanthomonas campestris pv. campestris (strain 8004).